A 446-amino-acid chain; its full sequence is RUN domain-containing protein 3A (446 aa).

The interval M1–A298 is interaction with RAP2A. Residues D52 to E189 enclose the RUN domain. Position 215 is a phosphothreonine (T215). Residues D216–P239 form a disordered region. S232 carries the phosphoserine modification. Residues Y267–I322 adopt a coiled-coil conformation. The span at P372–Q384 shows a compositional bias: polar residues. A disordered region spans residues P372–T404. A phosphoserine mark is found at S416 and S419.

The protein belongs to the RUNDC3 family. In terms of assembly, interacts with the GTP-bound form of RAP2A.

Its function is as follows. May act as an effector of RAP2A in neuronal cells. The chain is RUN domain-containing protein 3A (RUNDC3A) from Pongo abelii (Sumatran orangutan).